Reading from the N-terminus, the 123-residue chain is Small ribosomal subunit protein uS12 (123 aa).

Positions 11 to 32 (PRQEKTYREKARHLGASPQKRG) are disordered. Residue aspartate 89 is modified to 3-methylthioaspartic acid.

Belongs to the universal ribosomal protein uS12 family. In terms of assembly, part of the 30S ribosomal subunit. Contacts proteins S8 and S17. May interact with IF1 in the 30S initiation complex.

With S4 and S5 plays an important role in translational accuracy. Functionally, interacts with and stabilizes bases of the 16S rRNA that are involved in tRNA selection in the A site and with the mRNA backbone. Located at the interface of the 30S and 50S subunits, it traverses the body of the 30S subunit contacting proteins on the other side and probably holding the rRNA structure together. The combined cluster of proteins S8, S12 and S17 appears to hold together the shoulder and platform of the 30S subunit. This Methylocella silvestris (strain DSM 15510 / CIP 108128 / LMG 27833 / NCIMB 13906 / BL2) protein is Small ribosomal subunit protein uS12.